The primary structure comprises 369 residues: S-(hydroxymethyl)glutathione dehydrogenase (369 aa).

Residues Cys40, His62, Cys92, Cys95, Cys98, Cys106, and Cys169 each contribute to the Zn(2+) site.

Belongs to the zinc-containing alcohol dehydrogenase family. Class-III subfamily. In terms of assembly, homodimer. Requires Zn(2+) as cofactor.

The protein resides in the cytoplasm. The enzyme catalyses S-(hydroxymethyl)glutathione + NADP(+) = S-formylglutathione + NADPH + H(+). It catalyses the reaction S-(hydroxymethyl)glutathione + NAD(+) = S-formylglutathione + NADH + H(+). It carries out the reaction a primary alcohol + NAD(+) = an aldehyde + NADH + H(+). The catalysed reaction is a secondary alcohol + NAD(+) = a ketone + NADH + H(+). The enzyme catalyses S-nitrosoglutathione + NADH + H(+) = S-(hydroxysulfenamide)glutathione + NAD(+). In terms of biological role, has high formaldehyde dehydrogenase activity in the presence of glutathione and catalyzes the oxidation of normal alcohols in a reaction that is not GSH-dependent. In addition, hemithiolacetals other than those formed from GSH, including omega-thiol fatty acids, also are substrates. Also acts as a S-nitroso-glutathione reductase by catalyzing the NADH-dependent reduction of S-nitrosoglutathione. The protein is S-(hydroxymethyl)glutathione dehydrogenase (frmA) of Escherichia coli (strain SMS-3-5 / SECEC).